The primary structure comprises 351 residues: tRNA uridine(34) hydroxylase (351 aa).

The region spanning 146-240 (DDPQALFVDM…YARRAREQGL (95 aa)) is the Rhodanese domain. The Cysteine persulfide intermediate role is filled by Cys-200.

The protein belongs to the TrhO family.

The enzyme catalyses uridine(34) in tRNA + AH2 + O2 = 5-hydroxyuridine(34) in tRNA + A + H2O. In terms of biological role, catalyzes oxygen-dependent 5-hydroxyuridine (ho5U) modification at position 34 in tRNAs. The polypeptide is tRNA uridine(34) hydroxylase (Sodalis glossinidius (strain morsitans)).